A 150-amino-acid polypeptide reads, in one-letter code: D-aminoacyl-tRNA deacylase (150 aa).

Positions 137 to 138 (GP) match the Gly-cisPro motif, important for rejection of L-amino acids motif.

The protein belongs to the DTD family. As to quaternary structure, homodimer.

The protein localises to the cytoplasm. The catalysed reaction is glycyl-tRNA(Ala) + H2O = tRNA(Ala) + glycine + H(+). It catalyses the reaction a D-aminoacyl-tRNA + H2O = a tRNA + a D-alpha-amino acid + H(+). Its function is as follows. An aminoacyl-tRNA editing enzyme that deacylates mischarged D-aminoacyl-tRNAs. Also deacylates mischarged glycyl-tRNA(Ala), protecting cells against glycine mischarging by AlaRS. Acts via tRNA-based rather than protein-based catalysis; rejects L-amino acids rather than detecting D-amino acids in the active site. By recycling D-aminoacyl-tRNA to D-amino acids and free tRNA molecules, this enzyme counteracts the toxicity associated with the formation of D-aminoacyl-tRNA entities in vivo and helps enforce protein L-homochirality. This Listeria innocua serovar 6a (strain ATCC BAA-680 / CLIP 11262) protein is D-aminoacyl-tRNA deacylase.